The sequence spans 85 residues: Toxin Cll5c* (85 aa).

Residues 1–17 form the signal peptide; that stretch reads MNSLLIITACLVLFVWA. An LCN-type CS-alpha/beta domain is found at 18 to 83; it reads KEGYLVNKST…TYPLPNKSCS (66 aa). Intrachain disulfides connect cysteine 29-cysteine 82, cysteine 33-cysteine 58, cysteine 42-cysteine 63, and cysteine 46-cysteine 65. The propeptide at 84–85 is removed by a carboxypeptidase; it reads KK.

This sequence belongs to the long (4 C-C) scorpion toxin superfamily. Sodium channel inhibitor family. Beta subfamily. Expressed by the venom gland.

The protein localises to the secreted. Beta toxins bind voltage-independently at site-4 of sodium channels (Nav) and shift the voltage of activation toward more negative potentials thereby affecting sodium channel activation and promoting spontaneous and repetitive firing. This Centruroides limpidus (Mexican scorpion) protein is Toxin Cll5c*.